Here is a 757-residue protein sequence, read N- to C-terminus: RNA-directed RNA polymerase catalytic subunit (757 aa).

A disordered region spans residues 50-82 (SEKGKWTTNTETGAPQLNPIDGPLPEDNEPSGY). Over residues 55–64 (WTTNTETGAP) the composition is skewed to polar residues. 2 short sequence motifs (nuclear localization signal) span residues 187-195 (RKRRVRDNM) and 203-216 (RTIG…NKRS). The promoter-binding site stretch occupies residues 249-256 (RGFVYFVE). The RdRp catalytic domain maps to 286-483 (VRKMMTNSQD…GINMTKKKSY (198 aa)).

It belongs to the influenza viruses polymerase PB1 family. Influenza RNA polymerase is composed of three subunits: PB1, PB2 and PA. Interacts (via N-terminus) with PA (via C-terminus). Interacts (via C-terminus) with PB2 (via N-terminus); this interaction is essential for transcription initiation. Phosphorylated by host PRKCA.

It localises to the host nucleus. It is found in the host cytoplasm. The enzyme catalyses RNA(n) + a ribonucleoside 5'-triphosphate = RNA(n+1) + diphosphate. In terms of biological role, RNA-dependent RNA polymerase which is responsible for replication and transcription of virus RNA segments. The transcription of viral mRNAs occurs by a unique mechanism called cap-snatching. 5' methylated caps of cellular mRNAs are cleaved after 10-13 nucleotides by PA. In turn, these short capped RNAs are used as primers by PB1 for transcription of viral mRNAs. During virus replication, PB1 initiates RNA synthesis and copy vRNA into complementary RNA (cRNA) which in turn serves as a template for the production of more vRNAs. The protein is RNA-directed RNA polymerase catalytic subunit of Aves (Cat).